The sequence spans 33 residues: Cytochrome b6-f complex subunit 8 (33 aa).

The chain crosses the membrane as a helical span at residues 2 to 22 (LFTLAWASLAAVFSFSIAMVV).

Belongs to the PetN family. As to quaternary structure, the 4 large subunits of the cytochrome b6-f complex are cytochrome b6, subunit IV (17 kDa polypeptide, PetD), cytochrome f and the Rieske protein, while the 4 small subunits are PetG, PetL, PetM and PetN. The complex functions as a dimer.

The protein localises to the cellular thylakoid membrane. In terms of biological role, component of the cytochrome b6-f complex, which mediates electron transfer between photosystem II (PSII) and photosystem I (PSI), cyclic electron flow around PSI, and state transitions. The chain is Cytochrome b6-f complex subunit 8 from Synechococcus sp. (strain WH7803).